A 358-amino-acid polypeptide reads, in one-letter code: Peptide chain release factor 1 (358 aa).

Gln237 is subject to N5-methylglutamine.

The protein belongs to the prokaryotic/mitochondrial release factor family. In terms of processing, methylated by PrmC. Methylation increases the termination efficiency of RF1.

It is found in the cytoplasm. Peptide chain release factor 1 directs the termination of translation in response to the peptide chain termination codons UAG and UAA. The polypeptide is Peptide chain release factor 1 (Streptomyces griseus subsp. griseus (strain JCM 4626 / CBS 651.72 / NBRC 13350 / KCC S-0626 / ISP 5235)).